The primary structure comprises 1050 residues: Inositol hexakisphosphate kinase 1 (1050 aa).

4 disordered regions span residues 87-117 (KITR…LSSS), 129-177 (PAIK…IQNV), 269-319 (RQEN…DNEH), and 396-423 (SDLD…NNND). Ser150 bears the Phosphoserine mark. A compositionally biased stretch (polar residues) spans 156 to 173 (KQQSHQPQVLHHQTSLKP). A compositionally biased stretch (basic and acidic residues) spans 290–306 (ESIKEKPNTFEQDKEGE). Acidic residues predominate over residues 307-316 (QADEEEDEGD). Ser396 is subject to Phosphoserine. Residues 402 to 417 (NNGKNDTSNENKDIEV) are compositionally biased toward basic and acidic residues. Ser469 bears the Phosphoserine mark. Low complexity predominate over residues 508 to 522 (NDSYFSSSSSHNSCS). Disordered stretches follow at residues 508–539 (NDSY…DSGS) and 562–625 (RKRN…PNLQ). 8 positions are modified to phosphoserine: Ser537, Ser539, Ser566, Ser583, Ser589, Ser646, Ser664, and Ser670. A compositionally biased stretch (polar residues) spans 566-624 (SNTTTMGNHNARLGSSPSFLTQKSRASSHDASNTSMKTLGDSSSQASLQMDDSKVNPNL). 772 to 780 (PCALDLKMG) is a substrate binding site.

It belongs to the inositol phosphokinase (IPK) family.

The protein resides in the cytoplasm. The enzyme catalyses 1D-myo-inositol hexakisphosphate + ATP = 5-diphospho-1D-myo-inositol 1,2,3,4,6-pentakisphosphate + ADP. The catalysed reaction is 1-diphospho-1D-myo-inositol 2,3,4,5,6-pentakisphosphate + ATP + H(+) = 1,5-bis(diphospho)-1D-myo-inositol 2,3,4,6-tetrakisphosphate + ADP. In terms of biological role, converts inositol hexakisphosphate (InsP6) to diphosphoinositol pentakisphosphate (InsP7/PP-InsP5). Involved in phosphate regulation and polyphosphate accumulation. Required for resistance to salt stress, cell wall integrity, vacuole morphogenesis, and telomere maintenance. This Saccharomyces cerevisiae (strain ATCC 204508 / S288c) (Baker's yeast) protein is Inositol hexakisphosphate kinase 1 (KCS1).